The chain runs to 423 residues: COUP transcription factor 1 (423 aa).

A disordered region spans residues 1-81 (MAMVVSSWRD…QGPPGSGQSQ (81 aa)). Over residues 39–67 (EQQQQAGSGAPHTPQTPGQPGAPATPGTA) the composition is skewed to low complexity. The segment at residues 83 to 158 (HIECVVCGDK…VGMRREAVQR (76 aa)) is a DNA-binding region (nuclear receptor). 2 NR C4-type zinc fingers span residues 86–106 (CVVC…CEGC) and 122–146 (CRAN…LKKC). The 227-residue stretch at 184-410 (YLSGYISLLL…TLIRDMLLSG (227 aa)) folds into the NR LBD domain.

It belongs to the nuclear hormone receptor family. NR2 subfamily. Binds DNA as dimer; homodimer and probable heterodimer with NR2F6. Interacts with GTF2B; this interaction is direct. Interacts with COPS2.

It localises to the nucleus. In terms of biological role, coup (chicken ovalbumin upstream promoter) transcription factor binds to the ovalbumin promoter and, in conjunction with another protein (S300-II) stimulates initiation of transcription. Binds to both direct repeats and palindromes of the 5'-AGGTCA-3' motif. Represses transcriptional activity of LHCG. This is COUP transcription factor 1 (NR2F1) from Homo sapiens (Human).